A 1905-amino-acid polypeptide reads, in one-letter code: Tudor domain-containing 6-like (1905 aa).

3 Tudor domains span residues 1–30, 215–279, and 435–491; these read MVEVYFIDHGNTEMVDWYNVKKLPAELREM, YERG…LFDL, and SVTP…AYEL. The segment at 564 to 795 is disordered; sequence SRAEGSFGNS…SKLTPPLSKL (232 aa). Residues 573-591 show a composition bias toward basic and acidic residues; that stretch reads SEKRNQLNDLDRGGRKETT. A compositionally biased stretch (polar residues) spans 592 to 602; the sequence is SKFQPYSQGSK. Over residues 622–631 the composition is skewed to basic and acidic residues; the sequence is FQTKEREQFE. Composition is skewed to polar residues over residues 651-660 and 687-704; these read VQKNMSQSGF and LYSQGRETPSMSQNSSYS. Basic and acidic residues predominate over residues 715 to 726; sequence RSKERQVSEHKQ. 2 stretches are compositionally biased toward polar residues: residues 746–766 and 774–787; these read KASQNGSSSQTEAFWSSGSDQ and NASQQRRSTFQESK. 2 consecutive Tudor domains span residues 853-910 and 1060-1118; these read YVNL…LLSI and EIEV…IAAI. 4 disordered regions span residues 1213-1245, 1449-1599, 1655-1682, and 1827-1905; these read IEDNVIPSQADEDDHSEPSEEPCASESIETPAV, EDFE…TETE, VEDLDTENQESQICISGSDNRSKESGPV, and ESPA…APSV. 2 stretches are compositionally biased toward acidic residues: residues 1491–1500 and 1522–1535; these read EAEGLEDQDQ and EQAEDLVPEEDPGT. Basic and acidic residues predominate over residues 1553–1588; sequence SQEHKDFPEQEEDRVAEHKNDISEPDLQSKEQKEDL. A compositionally biased stretch (polar residues) spans 1663–1673; that stretch reads QESQICISGSD. Acidic residues predominate over residues 1876-1887; the sequence is FEPETDDMEQME.

As to quaternary structure, interacts with FRGY2 (a component of messenger ribonucleoprotein (mRNP) particle) during germ cell development. As to expression, expressed in testis.

It is found in the cytoplasm. In terms of biological role, tudor domain-containing protein involved in germ cell development, more specifically the formation of chromatoid body (during spermiogenesis), Balbiani body (during oogenesis), germ plasm (upon fertilization), and for proper miRNA expression and spliceosome maturation. Component of cytoplasmic mRNP particle through interaction with FRGY2, and binds to maternal mRNA related to cell cycle (RCC1, RHAMM, INCENP-A, MAD2L1, HELLS) and a germ plasm specific mRNA (Dead end/Dnd1), it is proposed a role in translational activation of the maternal mRNAs repressed in mRNP particle. The sequence is that of Tudor domain-containing 6-like from Xenopus laevis (African clawed frog).